Reading from the N-terminus, the 520-residue chain is AMP-binding domain-containing enzyme iboA (520 aa).

Residue 180 to 191 (LTSGSTSGSPKV) coordinates ATP. The FACS signature appears at 397–447 (DGNFHTGDLFEKQLDGSYLFRGRGDDWIKSEDSRFIDTKAIEEKINDVCSD).

It belongs to the ATP-dependent AMP-binding enzyme family. Requires Mg(2+) as cofactor.

The protein operates within secondary metabolite biosynthesis. Functionally, AMP-binding domain-containing enzyme; part of the gene cluster that mediates the biosynthesis of the psychoactive metabolites ibotenic acid and muscimol. The first committed step is glutamate hydroxylation by the 2-oxoglutarate-dependent dioxygenase iboH, and the last step is decarboxylation of ibotenic acid to muscimol by the decarboxylase iboD. The order of the intermediate reactions is somewhat ambiguous. IboA likely activates the carboxylic acid at position 5 to introduce an amide bond, and the flavin monooxygenase iboF generates the N-O bond. There are several options for the latter step. One option is that iboF directly hydroxylates the amide nitrogen formed by iboA to produce a hydroxamic acid species. Another option is that iboF hydroxylates an external N-containing compound, whose resulting N-O bond is subsequently introduced into the hydroxyglutamate scaffold. The paralogous PLP-dependent cystathionine gamma-synthase-like enzymes iboG1 and iboG2 are likely involved in substitution of the OH group at position 3 by the O-N moiety. The first cyclic intermediate is most probably tricholomic acid which is likely desaturated to ibotenic acid by the cytochrome P450 monooxygenase iboC. This chain is AMP-binding domain-containing enzyme iboA, found in Amanita muscaria (strain Koide BX008).